A 139-amino-acid polypeptide reads, in one-letter code: Peptide methionine sulfoxide reductase MsrB (139 aa).

One can recognise a MsrB domain in the interval 8–130 (DREWQRELSP…NSASLQLKTQ (123 aa)). Zn(2+) contacts are provided by Cys-47, Cys-50, Cys-96, and Cys-99. Residue Cys-119 is the Nucleophile of the active site.

It belongs to the MsrB Met sulfoxide reductase family. It depends on Zn(2+) as a cofactor.

The enzyme catalyses L-methionyl-[protein] + [thioredoxin]-disulfide + H2O = L-methionyl-(R)-S-oxide-[protein] + [thioredoxin]-dithiol. This Acinetobacter baumannii (strain AB307-0294) protein is Peptide methionine sulfoxide reductase MsrB.